A 155-amino-acid chain; its full sequence is Ribonuclease H (155 aa).

In terms of domain architecture, RNase H type-1 spans 1-142 (MLKQVEIFTD…CDELARAAAM (142 aa)). Aspartate 10, glutamate 48, aspartate 70, and aspartate 134 together coordinate Mg(2+).

The protein belongs to the RNase H family. Monomer. Requires Mg(2+) as cofactor.

The protein localises to the cytoplasm. It carries out the reaction Endonucleolytic cleavage to 5'-phosphomonoester.. Functionally, endonuclease that specifically degrades the RNA of RNA-DNA hybrids. This is Ribonuclease H from Citrobacter koseri (strain ATCC BAA-895 / CDC 4225-83 / SGSC4696).